A 933-amino-acid chain; its full sequence is Isoleucine--tRNA ligase (933 aa).

Positions 57 to 67 (PYANGNIHVGH) match the 'HIGH' region motif. Glu554 contributes to the L-isoleucyl-5'-AMP binding site. The 'KMSKS' region motif lies at 595–599 (KMSKS). Lys598 is an ATP binding site.

Belongs to the class-I aminoacyl-tRNA synthetase family. IleS type 1 subfamily. In terms of assembly, monomer.

It is found in the cytoplasm. The catalysed reaction is tRNA(Ile) + L-isoleucine + ATP = L-isoleucyl-tRNA(Ile) + AMP + diphosphate. Its function is as follows. Catalyzes the attachment of isoleucine to tRNA(Ile). As IleRS can inadvertently accommodate and process structurally similar amino acids such as valine, to avoid such errors it has two additional distinct tRNA(Ile)-dependent editing activities. One activity is designated as 'pretransfer' editing and involves the hydrolysis of activated Val-AMP. The other activity is designated 'posttransfer' editing and involves deacylation of mischarged Val-tRNA(Ile). This is Isoleucine--tRNA ligase from Streptococcus pyogenes serotype M28 (strain MGAS6180).